Consider the following 380-residue polypeptide: Cytochrome b (380 aa).

4 helical membrane-spanning segments follow: residues 33–53 (FGSL…FLAM), 77–98 (WLIR…YLHI), 113–133 (WNVG…GYVL), and 178–198 (FFAF…LHFL). Positions 83 and 97 each coordinate heme b. 2 residues coordinate heme b: histidine 182 and histidine 196. Histidine 201 lines the a ubiquinone pocket. The next 4 helical transmembrane spans lie at 226-246 (YKDL…SLFS), 288-308 (LGGV…PILH), 320-340 (LTQI…WIGG), and 347-367 (FIIV…VIMP).

This sequence belongs to the cytochrome b family. As to quaternary structure, the cytochrome bc1 complex contains 3 respiratory subunits (MT-CYB, CYC1 and UQCRFS1), 2 core proteins (UQCRC1 and UQCRC2) and probably 6 low-molecular weight proteins. Heme b serves as cofactor.

Its subcellular location is the mitochondrion inner membrane. Its function is as follows. Component of the ubiquinol-cytochrome c reductase complex (complex III or cytochrome b-c1 complex) that is part of the mitochondrial respiratory chain. The b-c1 complex mediates electron transfer from ubiquinol to cytochrome c. Contributes to the generation of a proton gradient across the mitochondrial membrane that is then used for ATP synthesis. This Zeus faber (John Dory) protein is Cytochrome b (mt-cyb).